A 266-amino-acid polypeptide reads, in one-letter code: uncharacterized protein (266 aa).

Serine 176 carries the post-translational modification Phosphoserine. Threonine 178 is subject to Phosphothreonine.

This is an uncharacterized protein from Schizosaccharomyces pombe (strain 972 / ATCC 24843) (Fission yeast).